The chain runs to 84 residues: Toxin NvePTx1 (84 aa).

The N-terminal stretch at 1 to 21 (MFSARLVLVFAVVLCIQLCNA) is a signal peptide. Residues 22-34 (SWLDERAMTQEKR) constitute a propeptide that is removed on maturation.

This sequence belongs to the sea anemone type 5 potassium channel toxin family. Post-translationally, contains 4 disulfide bonds. As to expression, in unfertilized eggs and early post-fertilization stages, is expressed uniformly. In gastrulae, the expression becomes spatially-localized and seems to be absent from the oral and aboral poles. In planulae, the expression is clearly observed in the ectoderm in packed gland cells absent from the two body poles, and upon metamorphosis, the expression diminishes. There is two types of gland cells, one large and elongated and another small and round. This toxin is maternally deposited at both protein and RNA levels.

Its subcellular location is the secreted. It localises to the nematocyst. Neurotoxin that is probably only defensive. Acts as a voltage-gated potassium channel (Kv) inhibitor. In vivo, induces a rapid increase in swimming speed on zebrafish larvae, as well as death which occurs between 2 and 18 hours later. The polypeptide is Toxin NvePTx1 (Nematostella vectensis (Starlet sea anemone)).